We begin with the raw amino-acid sequence, 201 residues long: Large ribosomal subunit protein uL4 (201 aa).

The disordered stretch occupies residues 43 to 71 (TRAQKTRSDVSGGGKKPWRQKGTGRARSG).

Belongs to the universal ribosomal protein uL4 family. As to quaternary structure, part of the 50S ribosomal subunit.

Functionally, one of the primary rRNA binding proteins, this protein initially binds near the 5'-end of the 23S rRNA. It is important during the early stages of 50S assembly. It makes multiple contacts with different domains of the 23S rRNA in the assembled 50S subunit and ribosome. Its function is as follows. Forms part of the polypeptide exit tunnel. This is Large ribosomal subunit protein uL4 from Psychromonas ingrahamii (strain DSM 17664 / CCUG 51855 / 37).